The sequence spans 167 residues: NADH-quinone oxidoreductase subunit B (167 aa).

Residues cysteine 40, cysteine 41, cysteine 105, and cysteine 134 each coordinate [4Fe-4S] cluster.

This sequence belongs to the complex I 20 kDa subunit family. In terms of assembly, NDH-1 is composed of 14 different subunits. Subunits NuoB, C, D, E, F, and G constitute the peripheral sector of the complex. The cofactor is [4Fe-4S] cluster.

The protein localises to the cell inner membrane. The enzyme catalyses a quinone + NADH + 5 H(+)(in) = a quinol + NAD(+) + 4 H(+)(out). Its function is as follows. NDH-1 shuttles electrons from NADH, via FMN and iron-sulfur (Fe-S) centers, to quinones in the respiratory chain. The immediate electron acceptor for the enzyme in this species is believed to be ubiquinone. Couples the redox reaction to proton translocation (for every two electrons transferred, four hydrogen ions are translocated across the cytoplasmic membrane), and thus conserves the redox energy in a proton gradient. The sequence is that of NADH-quinone oxidoreductase subunit B from Campylobacter jejuni subsp. jejuni serotype O:6 (strain 81116 / NCTC 11828).